The primary structure comprises 693 residues: Elongation factor G (693 aa).

The tr-type G domain occupies 8 to 282 (EKTRNIGIMA…AVVDYLPSPL (275 aa)). GTP-binding positions include 17 to 24 (AHVDAGKT), 81 to 85 (DTPGH), and 135 to 138 (NKMD).

Belongs to the TRAFAC class translation factor GTPase superfamily. Classic translation factor GTPase family. EF-G/EF-2 subfamily.

The protein resides in the cytoplasm. Its function is as follows. Catalyzes the GTP-dependent ribosomal translocation step during translation elongation. During this step, the ribosome changes from the pre-translocational (PRE) to the post-translocational (POST) state as the newly formed A-site-bound peptidyl-tRNA and P-site-bound deacylated tRNA move to the P and E sites, respectively. Catalyzes the coordinated movement of the two tRNA molecules, the mRNA and conformational changes in the ribosome. The sequence is that of Elongation factor G from Streptococcus mutans serotype c (strain ATCC 700610 / UA159).